A 281-amino-acid polypeptide reads, in one-letter code: Ribosomal RNA small subunit methyltransferase A (281 aa).

S-adenosyl-L-methionine is bound by residues asparagine 21, leucine 23, glycine 48, glutamate 69, aspartate 92, and asparagine 113.

Belongs to the class I-like SAM-binding methyltransferase superfamily. rRNA adenine N(6)-methyltransferase family. RsmA subfamily.

It localises to the cytoplasm. It carries out the reaction adenosine(1518)/adenosine(1519) in 16S rRNA + 4 S-adenosyl-L-methionine = N(6)-dimethyladenosine(1518)/N(6)-dimethyladenosine(1519) in 16S rRNA + 4 S-adenosyl-L-homocysteine + 4 H(+). Functionally, specifically dimethylates two adjacent adenosines (A1518 and A1519) in the loop of a conserved hairpin near the 3'-end of 16S rRNA in the 30S particle. May play a critical role in biogenesis of 30S subunits. This is Ribosomal RNA small subunit methyltransferase A from Ralstonia nicotianae (strain ATCC BAA-1114 / GMI1000) (Ralstonia solanacearum).